A 340-amino-acid chain; its full sequence is Glycerol-3-phosphate dehydrogenase [NAD(P)+] (340 aa).

Ser11, Trp12, Arg33, and Lys106 together coordinate NADPH. Sn-glycerol 3-phosphate-binding residues include Lys106, Gly137, and Ser139. Position 141 (Ala141) interacts with NADPH. Positions 192, 245, 255, 256, and 257 each coordinate sn-glycerol 3-phosphate. Lys192 functions as the Proton acceptor in the catalytic mechanism. Residue Arg256 participates in NADPH binding. Residues Val280 and Glu282 each coordinate NADPH.

The protein belongs to the NAD-dependent glycerol-3-phosphate dehydrogenase family.

It localises to the cytoplasm. It catalyses the reaction sn-glycerol 3-phosphate + NAD(+) = dihydroxyacetone phosphate + NADH + H(+). It carries out the reaction sn-glycerol 3-phosphate + NADP(+) = dihydroxyacetone phosphate + NADPH + H(+). Its pathway is membrane lipid metabolism; glycerophospholipid metabolism. Catalyzes the reduction of the glycolytic intermediate dihydroxyacetone phosphate (DHAP) to sn-glycerol 3-phosphate (G3P), the key precursor for phospholipid synthesis. The polypeptide is Glycerol-3-phosphate dehydrogenase [NAD(P)+] (Bacillus cereus (strain B4264)).